Consider the following 526-residue polypeptide: Protein spinster homolog 1 (526 aa).

The interval 1-43 (MTSRSSQGDAAPFLTQADNTEEEGAPDPGGHSSDEEEEEGKDH) is disordered. A run of 12 helical transmembrane segments spans residues 48–68 (HLLTGISYRHSVTIVIILFYI), 98–118 (GLVQTVFICSYMFLAPVFGYL), 126–146 (LIMCIGISFWSLVTLLSSFVS), 159–179 (LVGVGEASYSTIAPTIIADLF), 187–207 (MLSFFYFATPVGCGLGYIAGS), 218–238 (WALRVTPGLGLVAVLLLIFVA), 272–292 (FILSTFGFTTVAFVTGALALW), 321–341 (MIFGGITCVTGVLGVLTGVEI), 355–375 (LVCAVGMISSAPFLYLSLAFA), 385–405 (FIFIGETLLSLNWALVADILL), 419–439 (LQIVVSHLLGDAGSPYLIGVI), and 463–483 (MICAFVGVIGGGFFLATALFI).

Belongs to the major facilitator superfamily. Spinster (TC 2.A.1.49) family.

The protein localises to the lysosome membrane. It catalyses the reaction a 1-acyl-sn-glycero-3-phosphocholine(out) + H(+)(out) = a 1-acyl-sn-glycero-3-phosphocholine(in) + H(+)(in). The catalysed reaction is a 1-acyl-sn-glycero-3-phosphoethanolamine(out) + H(+)(out) = a 1-acyl-sn-glycero-3-phosphoethanolamine(in) + H(+)(in). The enzyme catalyses a 1-O-(1Z-alkenyl)-sn-glycero-3-phosphocholine(out) + H(+)(out) = a 1-O-(1Z-alkenyl)-sn-glycero-3-phosphocholine(in) + H(+)(in). It carries out the reaction a 1-O-(1Z-alkenyl)-sn-glycero-3-phosphoethanolamine(out) + H(+)(out) = a 1-O-(1Z-alkenyl)-sn-glycero-3-phosphoethanolamine(in) + H(+)(in). Mediates the rate-limiting, proton-dependent, lysosomal efflux of lysophospholipids. Selective for zwitterionic headgroups such as lysophosphatidylcholine (LPC) and lysophosphatidylethanolamine (LPE). Essential player in lysosomal homeostasis. The chain is Protein spinster homolog 1 (spns1) from Xenopus tropicalis (Western clawed frog).